Reading from the N-terminus, the 103-residue chain is Histone H4.2 (103 aa).

The span at 1 to 14 (MTGRGKGGKGLGKG) shows a compositional bias: gly residues. Residues 1 to 20 (MTGRGKGGKGLGKGGAKRHR) form a disordered region. K6 is modified (N6-acetyl-N6-methyllysine; alternate). 3 positions are modified to N6-methyllysine; alternate: K6, K9, and K13. K13 carries the post-translational modification N6-acetyl-N6-methyllysine; alternate. Residues 17–21 (KRHRK) mediate DNA binding. An N6-glutaryllysine modification is found at K92.

The protein belongs to the histone H4 family. The nucleosome is a histone octamer containing two molecules each of H2A, H2B, H3 and H4 assembled in one H3-H4 heterotetramer and two H2A-H2B heterodimers. The octamer wraps approximately 147 bp of DNA. Post-translationally, glutarylation at Lys-92 (H4K91glu) destabilizes nucleosomes by promoting dissociation of the H2A-H2B dimers from nucleosomes.

It is found in the nucleus. Its subcellular location is the chromosome. Core component of nucleosome. Nucleosomes wrap and compact DNA into chromatin, limiting DNA accessibility to the cellular machineries which require DNA as a template. Histones thereby play a central role in transcription regulation, DNA repair, DNA replication and chromosomal stability. DNA accessibility is regulated via a complex set of post-translational modifications of histones, also called histone code, and nucleosome remodeling. This Talaromyces funiculosus (Fruitlet core rot fungus) protein is Histone H4.2 (H4.2).